A 498-amino-acid chain; its full sequence is Glycerol kinase (498 aa).

Thr-13 is a binding site for ADP. Thr-13, Thr-14, and Ser-15 together coordinate ATP. Position 13 (Thr-13) interacts with sn-glycerol 3-phosphate. Residue Arg-17 participates in ADP binding. Sn-glycerol 3-phosphate is bound by residues Arg-83, Glu-84, Tyr-135, and Asp-244. Residues Arg-83, Glu-84, Tyr-135, Asp-244, and Gln-245 each coordinate glycerol. Thr-266 and Gly-309 together coordinate ADP. 4 residues coordinate ATP: Thr-266, Gly-309, Gln-313, and Gly-410. ADP is bound by residues Gly-410 and Asn-414.

This sequence belongs to the FGGY kinase family. Homotetramer and homodimer (in equilibrium).

The enzyme catalyses glycerol + ATP = sn-glycerol 3-phosphate + ADP + H(+). Its pathway is polyol metabolism; glycerol degradation via glycerol kinase pathway; sn-glycerol 3-phosphate from glycerol: step 1/1. With respect to regulation, activated by phosphorylation and inhibited by fructose 1,6-bisphosphate (FBP). In terms of biological role, key enzyme in the regulation of glycerol uptake and metabolism. Catalyzes the phosphorylation of glycerol to yield sn-glycerol 3-phosphate. This Symbiobacterium thermophilum (strain DSM 24528 / JCM 14929 / IAM 14863 / T) protein is Glycerol kinase.